A 314-amino-acid polypeptide reads, in one-letter code: Leucotoxin LukE (314 aa).

The signal sequence occupies residues 1–28 (MFKKKMLAASLSVGLIAPLASPIQESRA).

Belongs to the aerolysin family. Toxicity requires sequential binding and synergistic association of a class S and a class F component which form heterooligomeric complexes. LukE (class S) associates with LukD (class F). LukE can also associate with HlgB.

Its subcellular location is the secreted. In terms of biological role, part of a bi-component leucotoxin that acts by forming pores in the membrane of the target cells. LukE-LukD is as effective as the Panton-Valentine leucocidin (PVL) for inducing dermonecrosis when injected in the rabbit skin, but not hemolytic and poorly leucotoxic on human blood cells compared to other leucotoxins expressed by S.aureus. This chain is Leucotoxin LukE (lukE), found in Staphylococcus aureus.